The sequence spans 371 residues: Beta-1,3-galactosyltransferase 4 (371 aa).

Residues 1 to 4 (MPLS) lie on the Cytoplasmic side of the membrane. Residues 5 to 25 (LFRRVLLAVLLLVIIWTLFGP) form a helical; Signal-anchor for type II membrane protein membrane-spanning segment. Topologically, residues 26 to 371 (SGLGEELLSL…RCRFIAWFSS (346 aa)) are lumenal. An N-linked (GlcNAc...) asparagine glycan is attached at Asn143.

This sequence belongs to the glycosyltransferase 31 family. Expressed in heart, brain, spleen, kidney, lung and testis.

The protein resides in the golgi apparatus membrane. The catalysed reaction is a ganglioside GM2 (d18:1(4E)) + UDP-alpha-D-galactose = a ganglioside GM1 (d18:1(4E)) + UDP + H(+). It carries out the reaction a ganglioside GM2 + UDP-alpha-D-galactose = a ganglioside GM1 + UDP + H(+). It catalyses the reaction a ganglioside GD2 (d18:1(4E)) + UDP-alpha-D-galactose = a ganglioside GD1b (d18:1(4E)) + UDP + H(+). The enzyme catalyses a ganglioside GA2 (d18:1(4E)) + UDP-alpha-D-galactose = a ganglioside GA1 (d18:1(4E)) + UDP + H(+). It participates in protein modification; protein glycosylation. Functionally, involved in GM1/GD1B/GA1 ganglioside biosynthesis. The sequence is that of Beta-1,3-galactosyltransferase 4 from Mus musculus (Mouse).